The primary structure comprises 268 residues: Tryptophan synthase alpha chain (268 aa).

Active-site proton acceptor residues include Glu49 and Asp60.

It belongs to the TrpA family. Tetramer of two alpha and two beta chains.

It carries out the reaction (1S,2R)-1-C-(indol-3-yl)glycerol 3-phosphate + L-serine = D-glyceraldehyde 3-phosphate + L-tryptophan + H2O. Its pathway is amino-acid biosynthesis; L-tryptophan biosynthesis; L-tryptophan from chorismate: step 5/5. Functionally, the alpha subunit is responsible for the aldol cleavage of indoleglycerol phosphate to indole and glyceraldehyde 3-phosphate. In Haemophilus influenzae (strain ATCC 51907 / DSM 11121 / KW20 / Rd), this protein is Tryptophan synthase alpha chain.